A 421-amino-acid polypeptide reads, in one-letter code: Medium-chain specific acyl-CoA dehydrogenase, mitochondrial (421 aa).

A mitochondrion-targeting transit peptide spans 1–25; it reads MIALFRRSCGVLRSLSHFDWRSQHT. At Lys69 the chain carries N6-acetyllysine; alternate. Position 69 is an N6-succinyllysine; alternate (Lys69). At Lys79 the chain carries N6-acetyllysine. Position 158–167 (158–167) interacts with FAD; the sequence is YCVTEPVAGS. An octanoyl-CoA-binding site is contributed by Ser167. At Lys179 the chain carries N6-succinyllysine. An FAD-binding site is contributed by 191–193; the sequence is WIT. The residue at position 212 (Lys212) is an N6-acetyllysine; alternate. The residue at position 212 (Lys212) is an N6-succinyllysine; alternate. Residue Ser216 participates in octanoyl-CoA binding. N6-acetyllysine; alternate is present on residues Lys217, Lys259, and Lys271. Residues Lys217, Lys259, and Lys271 each carry the N6-succinyllysine; alternate modification. Asp278 lines the octanoyl-CoA pocket. N6-acetyllysine is present on Lys279. Arg281 provides a ligand contact to octanoyl-CoA. Lys301 carries the N6-acetyllysine modification. FAD-binding positions include 306–308 and 316–317; these read RKT and HQ. Residues Arg349 and Thr351 each contribute to the octanoyl-CoA site. A Phosphothreonine modification is found at Thr351. 374–378 lines the FAD pocket; it reads QIFGG. Glu401 contacts octanoyl-CoA. The Proton acceptor role is filled by Glu401. 402-405 serves as a coordination point for FAD; sequence GTAQ.

The protein belongs to the acyl-CoA dehydrogenase family. In terms of assembly, homotetramer. Interacts with the heterodimeric electron transfer flavoprotein ETF. FAD serves as cofactor. Acetylated. Could occur at proximity of the cofactor-binding sites and reduce the catalytic activity. Could be deacetylated by SIRT3.

It localises to the mitochondrion matrix. It carries out the reaction a medium-chain 2,3-saturated fatty acyl-CoA + oxidized [electron-transfer flavoprotein] + H(+) = a medium-chain (2E)-enoyl-CoA + reduced [electron-transfer flavoprotein]. The enzyme catalyses pentanoyl-CoA + oxidized [electron-transfer flavoprotein] + H(+) = (2E)-pentenoyl-CoA + reduced [electron-transfer flavoprotein]. It catalyses the reaction hexanoyl-CoA + oxidized [electron-transfer flavoprotein] + H(+) = (2E)-hexenoyl-CoA + reduced [electron-transfer flavoprotein]. The catalysed reaction is octanoyl-CoA + oxidized [electron-transfer flavoprotein] + H(+) = (2E)-octenoyl-CoA + reduced [electron-transfer flavoprotein]. It carries out the reaction decanoyl-CoA + oxidized [electron-transfer flavoprotein] + H(+) = (2E)-decenoyl-CoA + reduced [electron-transfer flavoprotein]. The enzyme catalyses dodecanoyl-CoA + oxidized [electron-transfer flavoprotein] + H(+) = (2E)-dodecenoyl-CoA + reduced [electron-transfer flavoprotein]. It catalyses the reaction tetradecanoyl-CoA + oxidized [electron-transfer flavoprotein] + H(+) = (2E)-tetradecenoyl-CoA + reduced [electron-transfer flavoprotein]. The catalysed reaction is oxidized [electron-transfer flavoprotein] + hexadecanoyl-CoA + H(+) = (2E)-hexadecenoyl-CoA + reduced [electron-transfer flavoprotein]. Its pathway is lipid metabolism; mitochondrial fatty acid beta-oxidation. Its function is as follows. Medium-chain specific acyl-CoA dehydrogenase is one of the acyl-CoA dehydrogenases that catalyze the first step of mitochondrial fatty acid beta-oxidation, an aerobic process breaking down fatty acids into acetyl-CoA and allowing the production of energy from fats. The first step of fatty acid beta-oxidation consists in the removal of one hydrogen from C-2 and C-3 of the straight-chain fatty acyl-CoA thioester, resulting in the formation of trans-2-enoyl-CoA. Electron transfer flavoprotein (ETF) is the electron acceptor that transfers electrons to the main mitochondrial respiratory chain via ETF-ubiquinone oxidoreductase (ETF dehydrogenase). Among the different mitochondrial acyl-CoA dehydrogenases, medium-chain specific acyl-CoA dehydrogenase acts specifically on acyl-CoAs with saturated 6 to 12 carbons long primary chains. The protein is Medium-chain specific acyl-CoA dehydrogenase, mitochondrial of Bos taurus (Bovine).